We begin with the raw amino-acid sequence, 202 residues long: Translation initiation factor IF-3 (202 aa).

The segment at 172-202 (KTRASARHPEVPGAGSVQDIDATGDTDGSPH) is disordered.

The protein belongs to the IF-3 family. Monomer.

The protein localises to the cytoplasm. IF-3 binds to the 30S ribosomal subunit and shifts the equilibrium between 70S ribosomes and their 50S and 30S subunits in favor of the free subunits, thus enhancing the availability of 30S subunits on which protein synthesis initiation begins. The chain is Translation initiation factor IF-3 from Mycobacterium leprae (strain TN).